Reading from the N-terminus, the 1333-residue chain is NPC1-like intracellular cholesterol transporter 1 (1333 aa).

Positions 1 to 20 (MAAAWQGWLLWALLLNSAQG) are cleaved as a signal peptide. Residues 21–284 (ELYTPTHKAG…SFYMGRMPGW (264 aa)) lie on the Extracellular side of the membrane. 9 disulfide bridges follow: C32-C90, C38-C56, C77-C125, C91-C129, C113-C254, C116-C172, C189-C197, C243-C259, and C256-C263. Residues 285–305 (LALIIIFTAVFVLLSVVLVYL) traverse the membrane as a helical segment. Over 306-352 (RVASNRNKNKTAGSQEAPNLPRKRRFSPHTVLGRFFESWGTRVASWP) the chain is Cytoplasmic. Residues 353–373 (LTVLALSFIVVIALSVGLTFI) traverse the membrane as a helical segment. The Extracellular portion of the chain corresponds to 374–632 (ELTTDPVELW…DEINRTTIQD (259 aa)). 2 disulfide bridges follow: C471–C485 and C525–C542. Residues 632–797 (DLPVFAISYL…MTAFVALLSL (166 aa)) form the SSD domain. The chain crosses the membrane as a helical span at residues 633 to 653 (LPVFAISYLIVFLYISLALGS). Residues 654–665 (YSRWSRVAVDSK) lie on the Cytoplasmic side of the membrane. Residues 666–686 (ATLGLGGVAVVLGAVVAAMGF) traverse the membrane as a helical segment. Topologically, residues 687 to 696 (YSYLGVPSSL) are extracellular. A helical membrane pass occupies residues 697-717 (VIIQVVPFLVLAVGADNIFIF). The Cytoplasmic segment spans residues 718-742 (VLEYQRLPRMPGEQREAHIGRTLGS). The chain crosses the membrane as a helical span at residues 743 to 763 (VAPSMLLCSLSEAICFFLGAL). Residues 764–776 (TSMPAVRTFALTS) are Extracellular-facing. Residues 777-797 (GLAIIFDFLLQMTAFVALLSL) form a helical membrane-spanning segment. At 798–846 (DSKRQEASRPDVVCCFSSRNLPPPKQKEGLLLCFFRKIYTPFLLHRFIR) the chain is on the cytoplasmic side. Residues 847-867 (PVVLLLFLVLFGANLYLMCNI) traverse the membrane as a helical segment. The Extracellular portion of the chain corresponds to 868 to 1113 (SVGLDQDLAL…QQYLTVLPEG (246 aa)). 3 disulfide bridges follow: C920–C925, C967–C1025, and C981–C990. Residues 1114-1134 (IFTLALCFVPTFVVCYLLLGL) form a helical membrane-spanning segment. At 1135–1142 (DIRSGILN) the chain is on the cytoplasmic side. A helical membrane pass occupies residues 1143–1163 (LLSIIMILVDTIGLMAVWGIS). The Extracellular portion of the chain corresponds to 1164–1165 (YN). Residues 1166-1186 (AVSLINLVTAVGMSVEFVSHI) traverse the membrane as a helical segment. Residues 1187–1206 (TRSFAVSTKPTRLERAKDAT) are Cytoplasmic-facing. A helical transmembrane segment spans residues 1207–1227 (IFMGSAVFAGVAMTNFPGILI). Residues 1228–1242 (LGFAQAQLIQIFFFR) lie on the Extracellular side of the membrane. The chain crosses the membrane as a helical span at residues 1243 to 1263 (LNLLITLLGLLHGLVFLPVVL). Over 1264–1333 (SYLGPDVNQA…SSLPKSDQKF (70 aa)) the chain is Cytoplasmic.

It belongs to the patched family. In terms of assembly, interacts with RAB11A, MYO5B and RAB11FIP2. Interaction with RAB11A, MYO5B and RAB11FIP2 is required for proper transport to the plasma membrane upon cholesterol depletion. Interacts with NPC2. Interacts with LIMA1. Highly glycosylated. Expressed in small intestine, stomach and muscle, along with detectable expression in lung, heart, gall bladder, brain, testis, skin and liver. Expression in liver is extremely low.

It localises to the apical cell membrane. The protein resides in the cell membrane. The catalysed reaction is cholesterol(in) = cholesterol(out). It catalyses the reaction sitosterol(out) = sitosterol(in). Its function is as follows. Plays a major role in cholesterol homeostasis. Critical for the uptake of cholesterol across the plasma membrane of the intestinal enterocyte. Involved in plant sterol absorption, it transports sitosterol, although at lower rates than cholesterol. May have a function in the transport of multiple lipids and their homeostasis, thereby influencing lipid metabolism regulation. May be involved in caveolin trafficking from the plasma membrane. Acts as a negative regulator of NPC2 and down-regulates its expression and secretion by inhibiting its maturation and accelerating its degradation. The chain is NPC1-like intracellular cholesterol transporter 1 from Mus musculus (Mouse).